The following is an 88-amino-acid chain: Sm-like protein LSM5 (88 aa).

Ala2 carries the N-acetylalanine modification. Positions 9–84 constitute a Sm domain; sequence LPSELIDRCI…IAILVPGGSP (76 aa).

It belongs to the snRNP Sm proteins family. In terms of assembly, component of the heptameric LSM1-LSM7 complex that forms a seven-membered ring structure with a donut shape. The LSM subunits are arranged in the order LSM1, LSM2, LSM3, LSM6, LSM5, LSM7 and LSM4. Component of the heptameric LSM2-LSM8 complex that forms a seven-membered ring structure with a donut shape. The LSM subunits are arranged in the order LSM8, LSM2, LSM3, LSM6, LSM5, LSM7 and LSM4. LSM2 subunit interacts only with its two neighboring subunits, LSM6A or LSM6B and LSM7. Expressed in roots, leaves, stems, flowers and siliques.

It is found in the cytoplasm. It localises to the nucleus. Its function is as follows. Component of LSM protein complexes, which are involved in RNA processing. Component of the cytoplasmic LSM1-LSM7 complex which is involved in mRNA degradation by promoting decapping and leading to accurate 5'-3' mRNA decay. The cytoplasmic LSM1-LSM7 complex regulates developmental gene expression by the decapping of specific development-related transcripts. Component of the nuclear LSM2-LSM8 complex which is involved splicing nuclear mRNAs. LSM2-LSM8 binds directly to the U6 small nuclear RNAs (snRNAs) and is essential for accurate splicing of selected development-related mRNAs through the stabilization of the spliceosomal U6 snRNA. Plays a critical role in the regulation of development-related gene expression. Involved in the control of plant sensitivity to abscisic acid (ABA) and drought. Functions with ABH1 as negative regulator of ABA signaling in guard cells. Required for regulation of splicing efficiency of many stress-responsive genes under stress conditions. The protein is Sm-like protein LSM5 of Arabidopsis thaliana (Mouse-ear cress).